The following is a 223-amino-acid chain: Thylakoid lumenal 15.0 kDa protein 2, chloroplastic (223 aa).

The protein localises to the plastid. It localises to the chloroplast thylakoid lumen. This is Thylakoid lumenal 15.0 kDa protein 2, chloroplastic from Arabidopsis thaliana (Mouse-ear cress).